The sequence spans 410 residues: Chitin deacetylase 3 (410 aa).

The N-terminal stretch at 1–18 (MYGHLSLSTLSLLAVVAA) is a signal peptide. Residues 19-39 (APFHESWLQPRDSDVSQLFRR) constitute a propeptide that is removed on maturation. N-linked (GlcNAc...) asparagine glycans are attached at residues asparagine 61 and asparagine 80. Residues 124–314 (KVWALSFDDG…KAVANGWSVK (191 aa)) enclose the NodB homology domain. Residue aspartate 131 is the Proton acceptor of the active site. Acetate is bound at residue aspartate 131. A Co(2+)-binding site is contributed by aspartate 132. Asparagine 149 is a glycosylation site (N-linked (GlcNAc...) asparagine). Co(2+) contacts are provided by histidine 183 and histidine 187. Residue tyrosine 225 participates in acetate binding. The N-linked (GlcNAc...) asparagine glycan is linked to asparagine 279. Histidine 289 functions as the Proton donor in the catalytic mechanism. N-linked (GlcNAc...) asparagine glycosylation occurs at asparagine 293. Residue serine 385 is the site of GPI-anchor amidated serine attachment. The propeptide at 386-410 (SSWPIANRPSLFVIACGLALAAIMV) is removed in mature form.

The protein belongs to the polysaccharide deacetylase family. Co(2+) is required as a cofactor.

Its subcellular location is the cell membrane. The catalysed reaction is [(1-&gt;4)-N-acetyl-beta-D-glucosaminyl](n) + n H2O = chitosan + n acetate. Hydrolyzes the N-acetamido groups of N-acetyl-D-glucosamine residues in chitin to form chitosan and acetate. Chitosan is required to anchor melanin to the cell wall, for maintenance of cell wall integrity, and for proper cytokinesis. Chitosan offers an advantage during infection as it is less readily detected than chitin by host immunosurveillance mechanisms. This chain is Chitin deacetylase 3, found in Cryptococcus neoformans var. neoformans serotype D (strain B-3501A) (Filobasidiella neoformans).